The following is a 159-amino-acid chain: 2-C-methyl-D-erythritol 2,4-cyclodiphosphate synthase (159 aa).

The a divalent metal cation site is built by aspartate 8 and histidine 10. Residues 8–10 (DVH) and 34–35 (HS) contribute to the 4-CDP-2-C-methyl-D-erythritol 2-phosphate site. Histidine 42 is a binding site for a divalent metal cation. Residues 56–58 (DIG), 61–65 (FPDTD), 100–106 (AQEPKMA), 132–135 (TTTE), phenylalanine 139, and arginine 142 each bind 4-CDP-2-C-methyl-D-erythritol 2-phosphate.

This sequence belongs to the IspF family. Homotrimer. A divalent metal cation is required as a cofactor.

It catalyses the reaction 4-CDP-2-C-methyl-D-erythritol 2-phosphate = 2-C-methyl-D-erythritol 2,4-cyclic diphosphate + CMP. Its pathway is isoprenoid biosynthesis; isopentenyl diphosphate biosynthesis via DXP pathway; isopentenyl diphosphate from 1-deoxy-D-xylulose 5-phosphate: step 4/6. Functionally, involved in the biosynthesis of isopentenyl diphosphate (IPP) and dimethylallyl diphosphate (DMAPP), two major building blocks of isoprenoid compounds. Catalyzes the conversion of 4-diphosphocytidyl-2-C-methyl-D-erythritol 2-phosphate (CDP-ME2P) to 2-C-methyl-D-erythritol 2,4-cyclodiphosphate (ME-CPP) with a corresponding release of cytidine 5-monophosphate (CMP). This is 2-C-methyl-D-erythritol 2,4-cyclodiphosphate synthase from Alkaliphilus metalliredigens (strain QYMF).